The sequence spans 318 residues: MNMNFLEFEQPIAELLAQIEELKHVSEHVGSSVDLTDEIKHLEKKNEELTRKLFSDLGAWQISQLARHPQRPYTEDYIARMFTDFDEMAGDRAFADDKAIVGGTARLDGQPVMVIGHQKGRDTQEKIRRNFGMPRPEGYRKALRLMQMAERFKMPILTFIDTPGAYPGVGAEERGQSEAIARNLKVMSSLKVPVICTVIGEGGSGGALAIGVGDRVNMLQYSTYSVISPEGCASILWKSADKANVAAEAMGITAARLKELKLIDSIVPEPLGGAHRNVDEMANLLKQRILTDLNELNSLHTDELLRKRYQQLMSHGYC.

The CoA carboxyltransferase C-terminal domain occupies 41–295 (HLEKKNEELT…KQRILTDLNE (255 aa)).

Belongs to the AccA family. In terms of assembly, acetyl-CoA carboxylase is a heterohexamer composed of biotin carboxyl carrier protein (AccB), biotin carboxylase (AccC) and two subunits each of ACCase subunit alpha (AccA) and ACCase subunit beta (AccD).

It localises to the cytoplasm. It catalyses the reaction N(6)-carboxybiotinyl-L-lysyl-[protein] + acetyl-CoA = N(6)-biotinyl-L-lysyl-[protein] + malonyl-CoA. Its pathway is lipid metabolism; malonyl-CoA biosynthesis; malonyl-CoA from acetyl-CoA: step 1/1. Its function is as follows. Component of the acetyl coenzyme A carboxylase (ACC) complex. First, biotin carboxylase catalyzes the carboxylation of biotin on its carrier protein (BCCP) and then the CO(2) group is transferred by the carboxyltransferase to acetyl-CoA to form malonyl-CoA. This chain is Acetyl-coenzyme A carboxylase carboxyl transferase subunit alpha, found in Tolumonas auensis (strain DSM 9187 / NBRC 110442 / TA 4).